The chain runs to 219 residues: ATP-dependent dethiobiotin synthetase BioD (219 aa).

14-19 (DVGKTY) contributes to the ATP binding site. Thr-18 provides a ligand contact to Mg(2+). Lys-37 is a catalytic residue. Ser-41 contacts substrate. Residues Asp-54, 114–117 (EGAG), and 175–176 (NN) each bind ATP. Mg(2+) contacts are provided by Asp-54 and Glu-114.

Belongs to the dethiobiotin synthetase family. Homodimer. It depends on Mg(2+) as a cofactor.

Its subcellular location is the cytoplasm. It carries out the reaction (7R,8S)-7,8-diammoniononanoate + CO2 + ATP = (4R,5S)-dethiobiotin + ADP + phosphate + 3 H(+). It participates in cofactor biosynthesis; biotin biosynthesis; biotin from 7,8-diaminononanoate: step 1/2. Its function is as follows. Catalyzes a mechanistically unusual reaction, the ATP-dependent insertion of CO2 between the N7 and N8 nitrogen atoms of 7,8-diaminopelargonic acid (DAPA, also called 7,8-diammoniononanoate) to form a ureido ring. The polypeptide is ATP-dependent dethiobiotin synthetase BioD (Fusobacterium nucleatum subsp. nucleatum (strain ATCC 25586 / DSM 15643 / BCRC 10681 / CIP 101130 / JCM 8532 / KCTC 2640 / LMG 13131 / VPI 4355)).